Reading from the N-terminus, the 314-residue chain is Vacuolar membrane protein FOSTERSB_4073 (314 aa).

The tract at residues 32–60 (KPTSSVVSETSSKSLPSLTSSAFSTSSGA) is disordered. The helical transmembrane segment at 93–113 (VYIAVGAVIGAIFISILIWWL) threads the bilayer. 3 positions are modified to phosphoserine: Ser148, Ser254, and Ser274. A disordered region spans residues 240 to 309 (EERKLNLNRP…PSMFLDDVLN (70 aa)). The span at 254-269 (SPERKEKKINSMEGYH) shows a compositional bias: basic and acidic residues.

The protein belongs to the PRM5 family.

The protein localises to the vacuole membrane. This Saccharomyces cerevisiae (strain FostersB) (Baker's yeast) protein is Vacuolar membrane protein FOSTERSB_4073.